We begin with the raw amino-acid sequence, 133 residues long: Transcription antitermination protein NusB (133 aa).

The protein belongs to the NusB family.

Involved in transcription antitermination. Required for transcription of ribosomal RNA (rRNA) genes. Binds specifically to the boxA antiterminator sequence of the ribosomal RNA (rrn) operons. In Clostridium botulinum (strain Alaska E43 / Type E3), this protein is Transcription antitermination protein NusB.